Consider the following 585-residue polypeptide: Arginine--tRNA ligase (585 aa).

Positions 131-141 (ANPTGPMHVGH) match the 'HIGH' region motif.

This sequence belongs to the class-I aminoacyl-tRNA synthetase family. In terms of assembly, monomer.

It localises to the cytoplasm. It carries out the reaction tRNA(Arg) + L-arginine + ATP = L-arginyl-tRNA(Arg) + AMP + diphosphate. This chain is Arginine--tRNA ligase, found in Brucella melitensis biotype 1 (strain ATCC 23456 / CCUG 17765 / NCTC 10094 / 16M).